The primary structure comprises 589 residues: Type I restriction enzyme EcoAI specificity subunit (589 aa).

Belongs to the type-I restriction system S methylase family. The type I restriction/modification system is composed of three polypeptides R, M and S. The restriction enzyme has stoichiometry R(2)M(2)S(1) while the methyltransferase is M(2)S(1).

Functionally, the specificity (S) subunit of a type I restriction enzyme; this subunit dictates DNA sequence specificity. The M and S subunits together form a methyltransferase (MTase) that methylates A-2 on the top strand and A-3 on the bottom strand of the sequence 5'-GAGN(7)GTCA-3'. In the presence of the R subunit the complex can also act as an endonuclease, binding to the same target sequence but cutting the DNA some distance from this site. Whether the DNA is cut or modified depends on the methylation state of the target sequence. When the target site is unmodified, the DNA is cut. When the target site is hemimethylated, the complex acts as a maintenance MTase modifying the DNA so that both strands become methylated. After locating a non-methylated recognition site, the enzyme complex serves as a molecular motor that translocates DNA in an ATP-dependent manner until a collision occurs that triggers cleavage. The protein is Type I restriction enzyme EcoAI specificity subunit of Escherichia coli.